A 329-amino-acid polypeptide reads, in one-letter code: L-carnitine dehydrogenase (329 aa).

19–24 contributes to the NAD(+) binding site; sequence GAGVIG.

It belongs to the 3-hydroxyacyl-CoA dehydrogenase family. L-carnitine dehydrogenase subfamily. In terms of assembly, homodimer.

It localises to the cytoplasm. The enzyme catalyses carnitine + NAD(+) = 3-dehydrocarnitine + NADH + H(+). It participates in amine and polyamine metabolism; carnitine metabolism. Its function is as follows. Catalyzes the NAD(+)-dependent oxidation of L-carnitine to 3-dehydrocarnitine. The protein is L-carnitine dehydrogenase of Nocardiopsis dassonvillei (strain ATCC 23218 / DSM 43111 / CIP 107115 / JCM 7437 / KCTC 9190 / NBRC 14626 / NCTC 10488 / NRRL B-5397 / IMRU 509) (Actinomadura dassonvillei).